Reading from the N-terminus, the 100-residue chain is Urease subunit gamma (100 aa).

Belongs to the urease gamma subunit family. As to quaternary structure, heterotrimer of UreA (gamma), UreB (beta) and UreC (alpha) subunits. Three heterotrimers associate to form the active enzyme.

The protein resides in the cytoplasm. It catalyses the reaction urea + 2 H2O + H(+) = hydrogencarbonate + 2 NH4(+). It participates in nitrogen metabolism; urea degradation; CO(2) and NH(3) from urea (urease route): step 1/1. The chain is Urease subunit gamma from Granulibacter bethesdensis (strain ATCC BAA-1260 / CGDNIH1).